A 285-amino-acid polypeptide reads, in one-letter code: uncharacterized protein (285 aa).

The ATP-grasp domain maps to 107 to 285 (FLTVDTTIFD…KHHLKRQMIP (179 aa)).

This is an uncharacterized protein from Mycoplasma pneumoniae (strain ATCC 29342 / M129 / Subtype 1) (Mycoplasmoides pneumoniae).